Here is a 113-residue protein sequence, read N- to C-terminus: U11-theraphotoxin-Hhn1a (113 aa).

Residues 1 to 21 form the signal peptide; it reads MNTVRVTFLLVFVLAVSLGQA. Residues 22–74 constitute a propeptide that is removed on maturation; it reads DKDENRMEMQEKTEQGKSYLDFAENLLLQKLEELEAKLPEEDSEESRNSRQKR. Residues 58-69 are compositionally biased toward basic and acidic residues; sequence KLPEEDSEESRN. Residues 58–82 are disordered; that stretch reads KLPEEDSEESRNSRQKRCIGEGVPC. 3 cysteine pairs are disulfide-bonded: Cys75/Cys90, Cys82/Cys95, and Cys89/Cys110.

The protein belongs to the neurotoxin 14 (magi-1) family. 01 (HNTX-16) subfamily. As to expression, expressed by the venom gland.

The protein localises to the secreted. In terms of biological role, probable ion channel inhibitor. The sequence is that of U11-theraphotoxin-Hhn1a from Cyriopagopus hainanus (Chinese bird spider).